A 429-amino-acid chain; its full sequence is UDP-N-acetylglucosamine 1-carboxyvinyltransferase (429 aa).

22–23 (KN) is a binding site for phosphoenolpyruvate. Arg102 serves as a coordination point for UDP-N-acetyl-alpha-D-glucosamine. Cys126 functions as the Proton donor in the catalytic mechanism. Cys126 carries the post-translational modification 2-(S-cysteinyl)pyruvic acid O-phosphothioketal. UDP-N-acetyl-alpha-D-glucosamine-binding positions include 131 to 135 (RPVDL), Asp316, and Ile338.

The protein belongs to the EPSP synthase family. MurA subfamily.

It localises to the cytoplasm. It carries out the reaction phosphoenolpyruvate + UDP-N-acetyl-alpha-D-glucosamine = UDP-N-acetyl-3-O-(1-carboxyvinyl)-alpha-D-glucosamine + phosphate. It functions in the pathway cell wall biogenesis; peptidoglycan biosynthesis. Functionally, cell wall formation. Adds enolpyruvyl to UDP-N-acetylglucosamine. This chain is UDP-N-acetylglucosamine 1-carboxyvinyltransferase, found in Rhodopseudomonas palustris (strain TIE-1).